Consider the following 438-residue polypeptide: Argininosuccinate lyase (438 aa).

The protein belongs to the lyase 1 family. Argininosuccinate lyase subfamily.

It localises to the cytoplasm. It carries out the reaction 2-(N(omega)-L-arginino)succinate = fumarate + L-arginine. It functions in the pathway amino-acid biosynthesis; L-arginine biosynthesis; L-arginine from L-ornithine and carbamoyl phosphate: step 3/3. In Clostridium kluyveri (strain NBRC 12016), this protein is Argininosuccinate lyase.